The following is a 450-amino-acid chain: ATP-dependent protease ATPase subunit HslU (450 aa).

Residues Val-29, 71–76 (GVGKTE), Asp-261, Glu-328, and Arg-400 contribute to the ATP site.

Belongs to the ClpX chaperone family. HslU subfamily. As to quaternary structure, a double ring-shaped homohexamer of HslV is capped on each side by a ring-shaped HslU homohexamer. The assembly of the HslU/HslV complex is dependent on binding of ATP.

The protein resides in the cytoplasm. Its function is as follows. ATPase subunit of a proteasome-like degradation complex; this subunit has chaperone activity. The binding of ATP and its subsequent hydrolysis by HslU are essential for unfolding of protein substrates subsequently hydrolyzed by HslV. HslU recognizes the N-terminal part of its protein substrates and unfolds these before they are guided to HslV for hydrolysis. The protein is ATP-dependent protease ATPase subunit HslU of Rickettsia canadensis (strain McKiel).